The chain runs to 181 residues: Acireductone dioxygenase (181 aa).

4 residues coordinate Fe(2+): histidine 97, histidine 99, glutamate 103, and histidine 141. Residues histidine 97, histidine 99, glutamate 103, and histidine 141 each contribute to the Ni(2+) site.

It belongs to the acireductone dioxygenase (ARD) family. In terms of assembly, monomer. The cofactor is Fe(2+). Ni(2+) is required as a cofactor.

It carries out the reaction 1,2-dihydroxy-5-(methylsulfanyl)pent-1-en-3-one + O2 = 3-(methylsulfanyl)propanoate + CO + formate + 2 H(+). It catalyses the reaction 1,2-dihydroxy-5-(methylsulfanyl)pent-1-en-3-one + O2 = 4-methylsulfanyl-2-oxobutanoate + formate + 2 H(+). It participates in amino-acid biosynthesis; L-methionine biosynthesis via salvage pathway; L-methionine from S-methyl-5-thio-alpha-D-ribose 1-phosphate: step 5/6. Functionally, catalyzes 2 different reactions between oxygen and the acireductone 1,2-dihydroxy-3-keto-5-methylthiopentene (DHK-MTPene) depending upon the metal bound in the active site. Fe-containing acireductone dioxygenase (Fe-ARD) produces formate and 2-keto-4-methylthiobutyrate (KMTB), the alpha-ketoacid precursor of methionine in the methionine recycle pathway. Ni-containing acireductone dioxygenase (Ni-ARD) produces methylthiopropionate, carbon monoxide and formate, and does not lie on the methionine recycle pathway. In Pseudomonas savastanoi pv. phaseolicola (strain 1448A / Race 6) (Pseudomonas syringae pv. phaseolicola (strain 1448A / Race 6)), this protein is Acireductone dioxygenase.